The sequence spans 60 residues: Large ribosomal subunit protein bL32 (60 aa).

Residues 1 to 21 (MAVPRNRHSNARKNIRRSHDA) form a disordered region.

The protein belongs to the bacterial ribosomal protein bL32 family.

The chain is Large ribosomal subunit protein bL32 from Chlamydia felis (strain Fe/C-56) (Chlamydophila felis).